Reading from the N-terminus, the 238-residue chain is Probable transcriptional regulatory protein CPn_0573/CP_0176/CPj0573/CpB0595 (238 aa).

The disordered stretch occupies residues 1-20 (MAGHSKWANTKHRKERADHK). Residues 9–20 (NTKHRKERADHK) show a composition bias toward basic residues.

The protein belongs to the TACO1 family.

It localises to the cytoplasm. This is Probable transcriptional regulatory protein CPn_0573/CP_0176/CPj0573/CpB0595 from Chlamydia pneumoniae (Chlamydophila pneumoniae).